A 1453-amino-acid polypeptide reads, in one-letter code: Clustered mitochondria protein homolog (1453 aa).

Polar residues predominate over residues 78–101 (LSENGQENSPHNSDSGHETSSPDS). Positions 78–110 (LSENGQENSPHNSDSGHETSSPDSPLTPIEEGA) are disordered. Residues 439–690 (EDGIRAEDCT…RTFPPDVNYL (252 aa)) form the Clu domain. Residues 979–1015 (PLTPSNEEVSMPINSVKKSRSSKRRKQISSGGKENDD) form a disordered region. Residues 995–1005 (KKSRSSKRRKQ) show a composition bias toward basic residues. TPR repeat units follow at residues 1235-1268 (AEID…HQIY) and 1277-1310 (ALIY…YSKT).

This sequence belongs to the CLU family.

It is found in the cytoplasm. In terms of biological role, mRNA-binding protein involved in proper cytoplasmic distribution of mitochondria. The sequence is that of Clustered mitochondria protein homolog from Brugia malayi (Filarial nematode worm).